The chain runs to 159 residues: 6,7-dimethyl-8-ribityllumazine synthase (159 aa).

Residues Trp-26, 57-59 (ALE), and 79-81 (CVV) each bind 5-amino-6-(D-ribitylamino)uracil. 84–85 (GT) serves as a coordination point for (2S)-2-hydroxy-3-oxobutyl phosphate. The Proton donor role is filled by His-87. Residue Asn-112 participates in 5-amino-6-(D-ribitylamino)uracil binding. Arg-126 contributes to the (2S)-2-hydroxy-3-oxobutyl phosphate binding site.

It belongs to the DMRL synthase family.

The catalysed reaction is (2S)-2-hydroxy-3-oxobutyl phosphate + 5-amino-6-(D-ribitylamino)uracil = 6,7-dimethyl-8-(1-D-ribityl)lumazine + phosphate + 2 H2O + H(+). It functions in the pathway cofactor biosynthesis; riboflavin biosynthesis; riboflavin from 2-hydroxy-3-oxobutyl phosphate and 5-amino-6-(D-ribitylamino)uracil: step 1/2. Its function is as follows. Catalyzes the formation of 6,7-dimethyl-8-ribityllumazine by condensation of 5-amino-6-(D-ribitylamino)uracil with 3,4-dihydroxy-2-butanone 4-phosphate. This is the penultimate step in the biosynthesis of riboflavin. This Corynebacterium glutamicum (strain ATCC 13032 / DSM 20300 / JCM 1318 / BCRC 11384 / CCUG 27702 / LMG 3730 / NBRC 12168 / NCIMB 10025 / NRRL B-2784 / 534) protein is 6,7-dimethyl-8-ribityllumazine synthase.